A 45-amino-acid chain; its full sequence is Large ribosomal subunit protein bL34 (45 aa).

It belongs to the bacterial ribosomal protein bL34 family.

In Kineococcus radiotolerans (strain ATCC BAA-149 / DSM 14245 / SRS30216), this protein is Large ribosomal subunit protein bL34.